The primary structure comprises 138 residues: Large ribosomal subunit protein uL16 (138 aa).

Residues 1 to 19 (MLIPKRVKYRRQHRPHRSG) are compositionally biased toward basic residues. Positions 1–24 (MLIPKRVKYRRQHRPHRSGVSKGG) are disordered.

This sequence belongs to the universal ribosomal protein uL16 family. Part of the 50S ribosomal subunit.

Binds 23S rRNA and is also seen to make contacts with the A and possibly P site tRNAs. This Corynebacterium diphtheriae (strain ATCC 700971 / NCTC 13129 / Biotype gravis) protein is Large ribosomal subunit protein uL16.